A 448-amino-acid chain; its full sequence is Phosphoglucosamine mutase (448 aa).

The active-site Phosphoserine intermediate is the Ser-100. Residues Ser-100, Asp-240, Asp-242, and Asp-244 each coordinate Mg(2+). Position 100 is a phosphoserine (Ser-100).

Belongs to the phosphohexose mutase family. Homodimer, may form a complex with CdaA. Mg(2+) is required as a cofactor. Post-translationally, activated by phosphorylation.

The enzyme catalyses alpha-D-glucosamine 1-phosphate = D-glucosamine 6-phosphate. In terms of biological role, catalyzes the conversion of glucosamine-6-phosphate to glucosamine-1-phosphate. Glucosamine-1-phosphate is used for cell wall biosynthesis. The polypeptide is Phosphoglucosamine mutase (Bacillus subtilis (strain 168)).